The primary structure comprises 920 residues: Phosphoenolpyruvate carboxylase (920 aa).

Catalysis depends on residues histidine 138 and lysine 583.

The protein belongs to the PEPCase type 1 family. Requires Mg(2+) as cofactor.

The enzyme catalyses oxaloacetate + phosphate = phosphoenolpyruvate + hydrogencarbonate. In terms of biological role, forms oxaloacetate, a four-carbon dicarboxylic acid source for the tricarboxylic acid cycle. This Streptococcus pyogenes serotype M1 protein is Phosphoenolpyruvate carboxylase.